Reading from the N-terminus, the 242-residue chain is Sugar fermentation stimulation protein homolog (242 aa).

The protein belongs to the SfsA family.

In Methanosphaera stadtmanae (strain ATCC 43021 / DSM 3091 / JCM 11832 / MCB-3), this protein is Sugar fermentation stimulation protein homolog.